The sequence spans 352 residues: Rhodopsin (352 aa).

Residues 1–36 (MNGTEGPFFYIPMVNTTGIVRSPYEYPQYYLVNPAA) are Extracellular-facing. N-linked (GlcNAc...) asparagine glycans are attached at residues Asn-2 and Asn-15. Residues 37–61 (YAALGAYMFFLILTGFPINFLTLYV) form a helical membrane-spanning segment. Residues 62–73 (TLEHKKLRTALN) are Cytoplasmic-facing. A helical membrane pass occupies residues 74-96 (LILLNLAVADLFMVFGGFTTTMY). Residues 97 to 110 (TSMHGYFVLGRLGC) lie on the Extracellular side of the membrane. Residues Cys-110 and Cys-187 are joined by a disulfide bond. A helical membrane pass occupies residues 111 to 133 (NVEGFFATLGGEIALWSLVVLAV). A 'Ionic lock' involved in activated form stabilization motif is present at residues 134 to 136 (ERW). At 134–152 (ERWVVVCKPISNFRFTENH) the chain is on the cytoplasmic side. Residues 153-173 (AIMGVAFSWIMAATCAVPPLV) traverse the membrane as a helical segment. At 174–202 (GWSRYIPEGMQCSCGVDYYTRAEGFNNES) the chain is on the extracellular side. The helical transmembrane segment at 203–224 (FVIYMFIVHFLAPLIVIFFCYG) threads the bilayer. Over 225–252 (RLLCAVKEAAAAQQESETTQRAEREVTR) the chain is Cytoplasmic. A helical membrane pass occupies residues 253–274 (MVIIMVIGFLTSWLPYASVAWY). Topologically, residues 275-286 (IFTHQGTEFGPL) are extracellular. The chain crosses the membrane as a helical span at residues 287–308 (FMTIPAFFAKSSALYNPMIYIC). N6-(retinylidene)lysine is present on Lys-296. Residues 309–352 (MNKQFRHCMITTLCCGKNPFEEEEGASTTKTEASSVSSSSVSPA) are Cytoplasmic-facing. 2 S-palmitoyl cysteine lipidation sites follow: Cys-322 and Cys-323. The segment at 331 to 352 (EEGASTTKTEASSVSSSSVSPA) is disordered. Residues 342 to 352 (SSVSSSSVSPA) are compositionally biased toward low complexity.

The protein belongs to the G-protein coupled receptor 1 family. Opsin subfamily. Phosphorylated on some or all of the serine and threonine residues present in the C-terminal region. In terms of processing, contains one covalently linked retinal chromophore.

The protein resides in the membrane. It is found in the cell projection. The protein localises to the cilium. It localises to the photoreceptor outer segment. Photoreceptor required for image-forming vision at low light intensity. While most salt water fish species use retinal as chromophore, most freshwater fish use 3-dehydroretinal, or a mixture of retinal and 3-dehydroretinal. Light-induced isomerization of 11-cis to all-trans retinal triggers a conformational change that activates signaling via G-proteins. Subsequent receptor phosphorylation mediates displacement of the bound G-protein alpha subunit by arrestin and terminates signaling. The protein is Rhodopsin (rho) of Pomatoschistus minutus (Sand goby).